The following is a 75-amino-acid chain: Large ribosomal subunit protein uL29 (75 aa).

The protein belongs to the universal ribosomal protein uL29 family.

In Pyrobaculum aerophilum (strain ATCC 51768 / DSM 7523 / JCM 9630 / CIP 104966 / NBRC 100827 / IM2), this protein is Large ribosomal subunit protein uL29.